Consider the following 660-residue polypeptide: MMQLNAGHSAPPGAWFDGAGVNFTLFSAHAEKVELCLFDESGNETRYALPARSGDVWHGYLPGARPGLRYGYRVHGPWNPAQGHRFNPAKLLLDPCARGVEGDVIDDPRLYGGIDTPDPRDNRDAMPKSVVMDDRYDWEDDAPPNIAWGETVIYEAHVRGLTRLHPDIPPALRGTYAALGHPAMIAWFQRLGITALELQPVAKFCSEPRLQRLGLANYWGYNPLALWAIETRYASQPAPQAALNEFRDAVKALHKAGIEVILDVVLNHSAELDLEGPTFSLRGIDNRSYYWIQDDGDYHNWTGCGNTLNLSHPAVVDYAIGCLKFWVEQCHVDGFRFDLATVMGRTPEFRQDAPLFEAMRRDRSLSAVKLIVEPWDIGPGGYQVGNYPPPFAEWNDRFRDDMRRFWLRSELDVGEVATRVAASADVYRRNGREPWACVNLVTAHDGFTLRDCVSFNGKHNEANGEDNRDGAWENHSNNHGYEGLGGGQSVQDARRASTHALLASLLLSQGTPMLLAGDEQGHSQHGNNNAYCQDNELTWFDWSQADEGLVAYTAALIRLRRQIPALTASRWWEENDGNVRWLNAAGAPMRPEEWHSGTRQLQILLSDRWLVTLNGRDEVSEIVLPEGEWRAVPPFAGEDNPVVMAVWHGPAHGVCVFRKS.

Residue aspartate 338 is the Nucleophile of the active site. The active-site Proton donor is the glutamate 373. Positions 460–472 (NEANGEDNRDGAW) are enriched in basic and acidic residues. The segment at 460–482 (NEANGEDNRDGAWENHSNNHGYE) is disordered.

This sequence belongs to the glycosyl hydrolase 13 family.

It catalyses the reaction Hydrolysis of (1-&gt;6)-alpha-D-glucosidic linkages to branches with degrees of polymerization of three or four glucose residues in limit dextrin.. The protein operates within glycan degradation; glycogen degradation. Functionally, removes maltotriose and maltotetraose chains that are attached by 1,6-alpha-linkage to the limit dextrin main chain, generating a debranched limit dextrin. The sequence is that of Glycogen debranching enzyme from Cronobacter sakazakii (strain ATCC BAA-894) (Enterobacter sakazakii).